A 62-amino-acid polypeptide reads, in one-letter code: Short neurotoxin B (62 aa).

The span at 1–16 (RRCFNHPSSQPQTNKS) shows a compositional bias: polar residues. Positions 1 to 21 (RRCFNHPSSQPQTNKSCPPGE) are disordered. Disulfide bonds link Cys3/Cys24, Cys17/Cys41, Cys43/Cys54, and Cys55/Cys60.

It belongs to the three-finger toxin family. Short-chain subfamily. Type I alpha-neurotoxin sub-subfamily. As to expression, expressed by the venom gland.

The protein localises to the secreted. Binds to muscle nicotinic acetylcholine receptor (nAChR) and inhibit acetylcholine from binding to the receptor, thereby impairing neuromuscular transmission. This chain is Short neurotoxin B, found in Laticauda crockeri (Crocker's sea snake).